The chain runs to 351 residues: Soluble interferon alpha/beta receptor OPG204 (351 aa).

The signal sequence occupies residues 1 to 19 (MTMKMMVHIYFVSLLLLLF). Ig-like C2-type domains are found at residues 65–147 (LGEP…RSHI) and 155–237 (PKTY…IVVS). 2 cysteine pairs are disulfide-bonded: Cys-73/Cys-129 and Cys-172/Cys-221. Residues Asn-117, Asn-182, Asn-261, Asn-269, and Asn-321 are each glycosylated (N-linked (GlcNAc...) asparagine; by host). One can recognise an Ig-like V-type domain in the interval 246-345 (PSQDHRFKLI…HNYYFEKTLT (100 aa)). Cys-272 and Cys-333 are disulfide-bonded.

Belongs to the interleukin-1 receptor family. As to quaternary structure, interacts with host IFNA1.

It is found in the secreted. In terms of biological role, counteracts the antiviral effects of host IFN-alpha/beta and key IFN-inducible proteins involved in viral RNA degradation suxh as host OAS1. Acts as a soluble IFN-alpha receptor and thus inhibits the interaction between host IFN-alpha and its receptor. In Vaccinia virus (strain Western Reserve) (VACV), this protein is Soluble interferon alpha/beta receptor OPG204 (OPG204).